A 487-amino-acid polypeptide reads, in one-letter code: 3-octaprenyl-4-hydroxybenzoate carboxy-lyase (487 aa).

Mn(2+) is bound at residue N172. Prenylated FMN-binding positions include 175–177 (IYR), 189–191 (RWL), and 194–195 (RG). E238 is a Mn(2+) binding site. Catalysis depends on D287, which acts as the Proton donor.

It belongs to the UbiD family. In terms of assembly, homohexamer. It depends on prenylated FMN as a cofactor. The cofactor is Mn(2+).

It is found in the cell membrane. It carries out the reaction a 4-hydroxy-3-(all-trans-polyprenyl)benzoate + H(+) = a 2-(all-trans-polyprenyl)phenol + CO2. Its pathway is cofactor biosynthesis; ubiquinone biosynthesis. Functionally, catalyzes the decarboxylation of 3-octaprenyl-4-hydroxy benzoate to 2-octaprenylphenol, an intermediate step in ubiquinone biosynthesis. In Nitrosomonas eutropha (strain DSM 101675 / C91 / Nm57), this protein is 3-octaprenyl-4-hydroxybenzoate carboxy-lyase.